The primary structure comprises 749 residues: Cytosolic phospholipase A2 (749 aa).

The interval 1–178 is phospholipid binding; the sequence is MSFIDPYQHI…MKKLLGPKNS (178 aa). Ser-2 is subject to Phosphoserine. The 117-residue stretch at 6-122 folds into the C2 domain; the sequence is PYQHIIVEHQ…KVGEKKEVPF (117 aa). Ca(2+) is bound by residues Asp-40, Thr-41, Asp-43, Asn-65, Asp-93, Ala-94, and Asn-95. The 601-residue stretch at 140–740 folds into the PLA2c domain; sequence SCPDLRFSMA…SNVEARRFFN (601 aa). The active-site Nucleophile is Ser-228. Residue Thr-268 is modified to Phosphothreonine. Residues 409–457 form a disordered region; sequence GSQSRGSTMEEELENITTKHIVSNDSSDSDDESHEPKGTENEDAGSDYQ. 3 positions are modified to phosphoserine: Ser-434, Ser-435, and Ser-437. A Phosphoserine; by MAPK modification is found at Ser-505. A Phosphoserine modification is found at Ser-515. Lys-541 participates in a covalent cross-link: Glycyl lysine isopeptide (Lys-Gly) (interchain with G-Cter in SUMO2). Asp-549 acts as the Proton acceptor in catalysis. Lys-606 is covalently cross-linked (Glycyl lysine isopeptide (Lys-Gly) (interchain with G-Cter in SUMO2)). Phosphoserine occurs at positions 727 and 729.

Interacts with KAT5. In terms of processing, phosphorylated at both Ser-505 and Ser-727 in response to mitogenic stimuli.

Its subcellular location is the cytoplasm. It is found in the golgi apparatus membrane. It localises to the nucleus envelope. It catalyses the reaction a 1,2-diacyl-sn-glycero-3-phosphocholine + H2O = a 1-acyl-sn-glycero-3-phosphocholine + a fatty acid + H(+). The enzyme catalyses a 1-O-alkyl-2-acyl-sn-glycero-3-phosphocholine + H2O = a 1-O-alkyl-sn-glycero-3-phosphocholine + a fatty acid + H(+). The catalysed reaction is a 1-acyl-sn-glycero-3-phosphocholine + H2O = sn-glycerol 3-phosphocholine + a fatty acid + H(+). It carries out the reaction 1-hexadecanoyl-2-(5Z,8Z,11Z,14Z-eicosatetraenoyl)-sn-glycero-3-phosphocholine + H2O = 1-hexadecanoyl-sn-glycero-3-phosphocholine + (5Z,8Z,11Z,14Z)-eicosatetraenoate + H(+). It catalyses the reaction 1,2-di-(5Z,8Z,11Z,14Z-eicosatetraenoyl)-sn-glycero-3-phosphocholine + H2O = 1-(5Z,8Z,11Z,14Z-eicosatetraenoyl)-sn-glycero-3-phosphocholine + (5Z,8Z,11Z,14Z)-eicosatetraenoate + H(+). The enzyme catalyses 1-octadecanoyl-2-(5Z,8Z,11Z,14Z-eicosatetraenoyl)-sn-glycero-3-phosphocholine + H2O = 1-octadecanoyl-sn-glycero-3-phosphocholine + (5Z,8Z,11Z,14Z)-eicosatetraenoate + H(+). The catalysed reaction is 1-hexadecanoyl-2-(9Z,12Z-octadecadienoyl)-sn-glycero-3-phosphocholine + H2O = (9Z,12Z)-octadecadienoate + 1-hexadecanoyl-sn-glycero-3-phosphocholine + H(+). It carries out the reaction 1-octadecanoyl-2-(9Z,12Z,15Z-octadecatrienoyl)-sn-glycero-3-phosphocholine + H2O = (9Z,12Z,15Z)-octadecatrienoate + 1-octadecanoyl-sn-glycero-3-phosphocholine + H(+). It catalyses the reaction 1-(5Z,8Z,11Z,14Z-eicosatetraenoyl)-2-hexadecanoyl-sn-glycero-3-phosphocholine + H2O = 1-(5Z,8Z,11Z,14Z-eicosatetraenoyl)-sn-glycero-3-phosphocholine + hexadecanoate + H(+). The enzyme catalyses 1-O-hexadecyl-2-(5Z,8Z,11Z,14Z)-eicosatetraenoyl-sn-glycero-3-phosphocholine + H2O = 1-O-hexadecyl-sn-glycero-3-phosphocholine + (5Z,8Z,11Z,14Z)-eicosatetraenoate + H(+). The catalysed reaction is 1,2-di-(9Z-octadecenoyl)-sn-glycero-3-phospho-(1'-sn-glycerol) + H2O = 1-(9Z-octadecenoyl)-sn-glycero-3-phospho-(1'-sn-glycerol) + (9Z)-octadecenoate + H(+). It carries out the reaction 1-octadecanoyl-2-(5Z,8Z,11Z,14Z-eicosatetraenoyl)-sn-glycero-3-phosphate + H2O = 1-octadecanoyl-sn-glycero-3-phosphate + (5Z,8Z,11Z,14Z)-eicosatetraenoate + H(+). It catalyses the reaction 1-hexadecanoyl-sn-glycero-3-phosphocholine + H2O = sn-glycerol 3-phosphocholine + hexadecanoate + H(+). The enzyme catalyses 2-(prostaglandin E2)-sn-glycero-3-phosphoethanolamine + H2O = sn-glycero-3-phosphoethanolamine + prostaglandin E2 + H(+). The catalysed reaction is 2-[(15S)-hydroxy-(5Z,8Z,11Z,13E)-eicosatetraenoyl]-sn-glycero-3-phosphocholine + H2O = (15S)-hydroxy-(5Z,8Z,11Z,13E)-eicosatetraenoate + sn-glycerol 3-phosphocholine + H(+). It carries out the reaction 2-[(15R)-hydroxy-(5Z,8Z,11Z,13E)-eicosatetraenoyl]-sn-glycero-3-phosphocholine + H2O = (15R)-hydroxy-(5Z,8Z,11Z,13E)-eicosatetraenoate + sn-glycerol 3-phosphocholine + H(+). It catalyses the reaction 2-(prostaglandin E2)-sn-glycero-3-phosphocholine + H2O = prostaglandin E2 + sn-glycerol 3-phosphocholine + H(+). The enzyme catalyses 2-[(11R)-hydroxy-(5Z,8Z,12E,14Z)-eicosatetraenoyl]-sn-glycero-3-phosphocholine + H2O = (11R)-hydroxy-(5Z,8Z,12E,14Z)-eicosatetraenoate + sn-glycerol 3-phosphocholine + H(+). The catalysed reaction is 1-(5Z,8Z,11Z,14Z-eicosatetraenoyl)-2-O-hexadecyl-sn-glycero-3-phosphocholine + H2O = 2-O-hexadecyl-sn-glycero-3-phosphocholine + (5Z,8Z,11Z,14Z)-eicosatetraenoate + H(+). It carries out the reaction 1-octadecanoyl-2-(5Z,8Z,11Z,14Z-eicosatetraenoyl)-sn-glycero-3-phosphocholine + glycerol = 1-(5Z,8Z,11Z,14Z-eicosatetraenoyl)-glycerol + 1-octadecanoyl-sn-glycero-3-phosphocholine. It catalyses the reaction 1-octadecanoyl-2-(9Z,12Z,15Z-octadecatrienoyl)-sn-glycero-3-phosphocholine + glycerol = 1-(9Z,12Z,15Z-octadecatrienoyl)-glycerol + 1-octadecanoyl-sn-glycero-3-phosphocholine. The protein operates within membrane lipid metabolism; glycerophospholipid metabolism. It functions in the pathway lipid metabolism; arachidonate metabolism. It participates in lipid metabolism; prostaglandin biosynthesis. Its pathway is lipid metabolism; leukotriene B4 biosynthesis. With respect to regulation, activated by cytosolic calcium, which is necessary for binding to membrane lipids. Activated by phosphorylation in response to mitogenic stimuli. In terms of biological role, has primarily calcium-dependent phospholipase and lysophospholipase activities, with a major role in membrane lipid remodeling and biosynthesis of lipid mediators of the inflammatory response. Plays an important role in embryo implantation and parturition through its ability to trigger prostanoid production. Preferentially hydrolyzes the ester bond of the fatty acyl group attached at sn-2 position of phospholipids (phospholipase A2 activity). Selectively hydrolyzes sn-2 arachidonoyl group from membrane phospholipids, providing the precursor for eicosanoid biosynthesis via the cyclooxygenase pathway. In an alternative pathway of eicosanoid biosynthesis, hydrolyzes sn-2 fatty acyl chain of eicosanoid lysophopholipids to release free bioactive eicosanoids. Hydrolyzes the ester bond of the fatty acyl group attached at sn-1 position of phospholipids (phospholipase A1 activity) only if an ether linkage rather than an ester linkage is present at the sn-2 position. This hydrolysis is not stereospecific. Has calcium-independent phospholipase A2 and lysophospholipase activities in the presence of phosphoinositides. Has O-acyltransferase activity. Catalyzes the transfer of fatty acyl chains from phospholipids to a primary hydroxyl group of glycerol (sn-1 or sn-3), potentially contributing to monoacylglycerol synthesis. The polypeptide is Cytosolic phospholipase A2 (PLA2G4A) (Pongo abelii (Sumatran orangutan)).